The chain runs to 331 residues: Threonine-phosphate decarboxylase (331 aa).

At K192 the chain carries N6-(pyridoxal phosphate)lysine.

This sequence belongs to the class-I pyridoxal-phosphate-dependent aminotransferase family. As to quaternary structure, homodimer. The cofactor is pyridoxal 5'-phosphate.

Its subcellular location is the cytoplasm. It catalyses the reaction O-phospho-L-threonine + H(+) = (R)-1-aminopropan-2-yl phosphate + CO2. The protein operates within cofactor biosynthesis; adenosylcobalamin biosynthesis. Functionally, decarboxylates L-threonine-O-3-phosphate to yield (R)-1-amino-2-propanol O-2-phosphate, the precursor for the linkage between the nucleotide loop and the corrin ring in cobalamin. This is Threonine-phosphate decarboxylase (cobC) from Pseudomonas aeruginosa (strain ATCC 15692 / DSM 22644 / CIP 104116 / JCM 14847 / LMG 12228 / 1C / PRS 101 / PAO1).